The following is a 236-amino-acid chain: UPF0177 protein YaiH (236 aa).

6 helical membrane-spanning segments follow: residues 16 to 36, 51 to 71, 90 to 110, 131 to 151, 180 to 200, and 210 to 230; these read YFSLFILLFAIYWFPDVILGY, ATATWIFLGNMAISLFLGILI, ILFLLFTTIVLFIIYFFTFTY, IVFPFVQFISFAICAPIFEEA, TGANPILIVYLPMSVVLTLIY, and ILVHCLMNALLPTIIVFLQTI.

The protein belongs to the UPF0177 family.

The protein localises to the cell membrane. This chain is UPF0177 protein YaiH (yaiH), found in Lactococcus lactis subsp. lactis (strain IL1403) (Streptococcus lactis).